The chain runs to 306 residues: Diterpene cyclase eriG (306 aa).

The next 2 helical transmembrane spans lie at 13–33 (IFFG…SIFA) and 43–63 (ATLV…IYFF). Asn64 carries N-linked (GlcNAc...) asparagine glycosylation. The next 4 helical transmembrane spans lie at 115 to 135 (FLPE…TSYG), 161 to 181 (IAPA…WAGL), 213 to 233 (LIIT…AGIF), and 265 to 285 (MFYT…GLGL).

The protein belongs to the UbiA prenyltransferase family. Requires Mg(2+) as cofactor.

It localises to the membrane. It carries out the reaction (2E,6E,10E)-geranylgeranyl diphosphate = (-)-cyatha-3,12-diene + diphosphate. It participates in secondary metabolite biosynthesis. With respect to regulation, EDTA completely blocks the reaction. Functionally, diterpene cyclase; part of the gene cluster that mediates the biosynthesis of erinacines, cyathane-xylosides that show unique biological activities, including leishmanicidal activity, stimulating activity for nerve growth-factor synthesis, and agonistic activity toward the kappa opioid receptor. Within the pathway, eriG acts as a diterpene cyclase that converts geranylgeranyl diphosphate (GGPP) into cyatha-3,12-diene. EriG is unable to use geranyl diphosphate (GPP) or farnesyl diphosphate (FPP) as substrates. The first step of the erinacines biosynthesis pathway is catalyzed by the geranylgeranyl diphosphate (GGPP) synthase eriE via conversion of farnesyl pyrophosphate and isopentyl pyrophosphate into geranylgeranyl pyrophosphate (GGPP). GGPP is then substrate of the diterpene cyclase eriG for the production of cyatha-3,12-diene. The cytochrome P450 monooxygenase eriI then hydroxylates cyatha-3,12-diene at C-14 of the seven-membered ring to produce erinacol, which is further hydroxylated at C-15 by the cytochrome P450 monooxygenase eriC to yield cyathadiol. The cytochrome P450 monooxygenase eriA then catalyzes C-11 hydroxylation in the presence of the short chain dehydrogenase/reductase (SDR) eriH, which leads to the production of cyathatriol. The acetyltransferase eriL converts cyathatriol into 11-O-acetyl-cyathatriol. The SDR eriH catalyzes further oxidation of 11-O-acetyl-cyathatriol into 1-O-acetylcyathin A3. Finally, the glycosyl transferase eriJ tranfers xylose from UDP-xylose onto C-14 of 11-O-acetyl-cyathatriol to form eracine Q. EriJ is also able to convert 11-O-acetyl-cyathatriol to eracine Q2 by using UDP-D-glucose as cosubstrate, but at a lower rate. This chain is Diterpene cyclase eriG, found in Hericium erinaceus (Lion's mane mushroom).